The following is a 485-amino-acid chain: Podocalyxin (485 aa).

The N-terminal stretch at 1–24 (MRPTLALSALLLLQLLLLSTPSLS) is a signal peptide. The disordered stretch occupies residues 22–267 (SLSQDNGNKT…STPSSTWTSG (246 aa)). At 25-386 (QDNGNKTDTS…PPEVNEDRFS (362 aa)) the chain is on the extracellular side. Positions 26–57 (DNGNKTDTSDITSIDQNQDKPATNQPSNATPK) are enriched in polar residues. 2 N-linked (GlcNAc...) asparagine glycosylation sites follow: Asn-29 and Asn-82. The span at 58–109 (SSVQPPTPTSISTSSPDPKATQSSNSSVTTTSDSTTDRTSSSTSTVPTTSNS) shows a compositional bias: low complexity. 2 stretches are compositionally biased toward polar residues: residues 110-128 (GQTVSSGGKSSDKITTALP) and 135-149 (NASSQPTDLNTSTKL). Residues Asn-135, Asn-144, and Asn-156 are each glycosylated (N-linked (GlcNAc...) asparagine). Residues 150-161 (PSTPTTNSTASP) are compositionally biased toward low complexity. 3 stretches are compositionally biased toward polar residues: residues 163–176 (QPVSHSEGQHTTVQ), 186–228 (DNTT…QPTG), and 235–253 (SVPTTEEFTHSTSSWTPVV). N-linked (GlcNAc...) asparagine glycosylation is present at Asn-187. The span at 254–267 (SQGPSTPSSTWTSG) shows a compositional bias: low complexity. Asn-287 carries N-linked (GlcNAc...) asparagine glycosylation. The helical transmembrane segment at 387-407 (LPLIITIVCMASFLLLVAALY) threads the bilayer. Over 408–485 (GCCHQRISQR…DLDEEEDTHL (78 aa)) the chain is Cytoplasmic. Thr-445 bears the Phosphothreonine mark. A Phosphoserine modification is found at Ser-464. A Phosphothreonine modification is found at Thr-483.

It belongs to the podocalyxin family. In terms of assembly, monomer; when associated with the membrane raft. Oligomer; when integrated in the apical membrane. Interacts with NHERF2. Interacts (via the C-terminal PDZ-binding motif DTHL) with NHERF1 (via the PDZ domains); the interaction take place early in the secretory pathway and is necessary for its apical membrane sorting. Found in a complex with EZR, PODXL and NHERF2. Associates with the actin cytoskeleton through complex formation with EZR and NHERF2. Interacts (via the C-terminal PDZ-binding motif DTHL) with NHERF1 (via the PDZ domains); interaction is not detected in glomerular epithelium cells. Interacts (via the C-terminal PDZ-binding motif DTHL) with NHERF2 (via the PDZ 1 domain); interaction is detected in glomerular epithelium cells. Interacts with EZR. Post-translationally, N- and O-linked glycosylated. Sialoglycoprotein. As to expression, glomerular epithelium cell (podocyte) (at protein level).

The protein resides in the apical cell membrane. The protein localises to the cell projection. It is found in the microvillus. It localises to the membrane raft. Its subcellular location is the lamellipodium. The protein resides in the filopodium. The protein localises to the ruffle. It is found in the membrane. In terms of biological role, involved in the regulation of both adhesion and cell morphology and cancer progression. Functions as an anti-adhesive molecule that maintains an open filtration pathway between neighboring foot processes in the podocyte by charge repulsion. Acts as a pro-adhesive molecule, enhancing the adherence of cells to immobilized ligands, increasing the rate of migration and cell-cell contacts in an integrin-dependent manner. Induces the formation of apical actin-dependent microvilli. Involved in the formation of a preapical plasma membrane subdomain to set up initial epithelial polarization and the apical lumen formation during renal tubulogenesis. Plays a role in cancer development and aggressiveness by inducing cell migration and invasion through its interaction with the actin-binding protein EZR. Affects EZR-dependent signaling events, leading to increased activities of the MAPK and PI3K pathways in cancer cells. This is Podocalyxin (Podxl) from Rattus norvegicus (Rat).